Here is a 465-residue protein sequence, read N- to C-terminus: Methylenetetrahydrofolate--tRNA-(uracil-5-)-methyltransferase TrmFO (465 aa).

3–8 (GAGLAG) contacts FAD.

Belongs to the MnmG family. TrmFO subfamily. It depends on FAD as a cofactor.

The protein localises to the cytoplasm. The catalysed reaction is uridine(54) in tRNA + (6R)-5,10-methylene-5,6,7,8-tetrahydrofolate + NADH + H(+) = 5-methyluridine(54) in tRNA + (6S)-5,6,7,8-tetrahydrofolate + NAD(+). It catalyses the reaction uridine(54) in tRNA + (6R)-5,10-methylene-5,6,7,8-tetrahydrofolate + NADPH + H(+) = 5-methyluridine(54) in tRNA + (6S)-5,6,7,8-tetrahydrofolate + NADP(+). In terms of biological role, catalyzes the folate-dependent formation of 5-methyl-uridine at position 54 (M-5-U54) in all tRNAs. The chain is Methylenetetrahydrofolate--tRNA-(uracil-5-)-methyltransferase TrmFO from Bradyrhizobium sp. (strain ORS 278).